Consider the following 555-residue polypeptide: Trehalase (555 aa).

The signal sequence occupies residues 1 to 16 (MIPFLLMVAFADTVLQ). N-linked (GlcNAc...) asparagine glycosylation is present at Asn-46. Substrate contacts are provided by residues Arg-164, 171-172 (WD), and Asn-208. The N-linked (GlcNAc...) asparagine glycan is linked to Asn-216. Residues 217–219 (RSQ), 282–284 (RPE), and Gly-316 contribute to the substrate site. Asp-318 serves as the catalytic Proton donor/acceptor. Residues Asn-334 and Asn-371 are each glycosylated (N-linked (GlcNAc...) asparagine). Glu-516 acts as the Proton donor/acceptor in catalysis. Residue Glu-531 coordinates substrate.

It belongs to the glycosyl hydrolase 37 family. In terms of tissue distribution, bean-shaped accessory glands (bags).

Its subcellular location is the secreted. It carries out the reaction alpha,alpha-trehalose + H2O = alpha-D-glucose + beta-D-glucose. The polypeptide is Trehalase (Tenebrio molitor (Yellow mealworm beetle)).